Here is a 67-residue protein sequence, read N- to C-terminus: MMTALETRLSVADGTHAAALRQRLQAALAECRRELARGACPEHFQFLQQQARALEGGLGILSQLTED.

A coiled-coil region spans residues 16–37 (HAAALRQRLQAALAECRRELAR).

The protein belongs to the YscE family. In terms of assembly, forms a stable ternary complex with PscF/SctF and PscG within the cytoplasm. Co-stabilized by PscG.

Its subcellular location is the cytoplasm. Its function is as follows. Chaperone of the type III secretion system (T3SS), also called injectisome, which is used to inject bacterial effector proteins into eukaryotic host cells, facilitating the establishment and dissemination of infection. Along with PscG, prevents premature polymerization of the PscF/SctF needle protein within the cytoplasm. Required for type III secretion needle assembly. Also required for cytotoxicity by influencing PscF/SctF levels. The chain is Type 3 secretion system chaperone PscE (pscE) from Pseudomonas aeruginosa (strain ATCC 15692 / DSM 22644 / CIP 104116 / JCM 14847 / LMG 12228 / 1C / PRS 101 / PAO1).